A 202-amino-acid chain; its full sequence is MELTINGAGKGTVSVSDVAFARDFNEALVHQVVTAYLAGGRQGSKAQKTRSQVSGGGKKPWRQKGSGRARAGTIRSPIWRGGGKTFAATPLDHSQKVNKKMYRAAMQSILSELVRQERLVVVEEMAVEAPKTKQFNAKLKDLGLENVLIVADAVDQNLYLASRNIPHVDVCDAVAINPVSLIAHDKVLVTVSALKKIEEMLG.

A disordered region spans residues Gly-40–Ala-71. Positions Ser-44–Val-53 are enriched in polar residues.

Belongs to the universal ribosomal protein uL4 family. Part of the 50S ribosomal subunit.

Its function is as follows. One of the primary rRNA binding proteins, this protein initially binds near the 5'-end of the 23S rRNA. It is important during the early stages of 50S assembly. It makes multiple contacts with different domains of the 23S rRNA in the assembled 50S subunit and ribosome. Functionally, forms part of the polypeptide exit tunnel. This Hahella chejuensis (strain KCTC 2396) protein is Large ribosomal subunit protein uL4.